The primary structure comprises 698 residues: Endogenous retrovirus group K member 21 Env polyprotein (698 aa).

The disordered stretch occupies residues 1–25; it reads MHPSEMQRKAPPRRRRHRNRAPLTH. The signal sequence occupies residues 1 to 88; that stretch reads MHPSEMQRKA…ALMIVSMVVS (88 aa). Positions 10-20 are enriched in basic residues; the sequence is APPRRRRHRNR. At 89–631 the chain is on the extracellular side; the sequence is LPMPAGAAAA…NLNPVTWVKT (543 aa). 7 N-linked (GlcNAc...) asparagine glycosylation sites follow: N99, N127, N152, N273, N354, N371, and N460. Residues 465–485 are fusion peptide; sequence FIFTLIAVIMGLIAVTAMAAV. N-linked (GlcNAc...) asparagine glycosylation is found at N506, N553, N565, and N584. A helical membrane pass occupies residues 632–652; that stretch reads IGSTTIINLILILVCLFCLLL. Topologically, residues 653–698 are cytoplasmic; the sequence is VCRCTQQLRRDSDHRERAMMTMVVLSKRKGGNVGKSKRDQIVTVSV.

It belongs to the beta type-B retroviral envelope protein family. HERV class-II K(HML-2) env subfamily. In terms of assembly, the surface (SU) and transmembrane (TM) proteins form a heterodimer. SU and TM are attached by noncovalent interactions or by a labile interchain disulfide bond. In terms of processing, specific enzymatic cleavages in vivo yield the mature SU and TM proteins.

It localises to the cell membrane. It is found in the virion. Retroviral envelope proteins mediate receptor recognition and membrane fusion during early infection. Endogenous envelope proteins may have kept, lost or modified their original function during evolution. This endogenous envelope protein has lost its original fusogenic properties. Its function is as follows. SU mediates receptor recognition. In terms of biological role, TM anchors the envelope heterodimer to the viral membrane through one transmembrane domain. The other hydrophobic domain, called fusion peptide, mediates fusion of the viral membrane with the target cell membrane. This chain is Endogenous retrovirus group K member 21 Env polyprotein (ERVK-21), found in Homo sapiens (Human).